Here is a 740-residue protein sequence, read N- to C-terminus: Ion-translocating oxidoreductase complex subunit C (740 aa).

2 4Fe-4S ferredoxin-type domains span residues 369–397 and 407–436; these read GEPQ…QQLY and KATT…VQYF. Residues cysteine 377, cysteine 380, cysteine 383, cysteine 387, cysteine 416, cysteine 419, cysteine 422, and cysteine 426 each contribute to the [4Fe-4S] cluster site. The disordered stretch occupies residues 598 to 716; sequence AKARKLEQQQ…EPEEQVDPRK (119 aa).

This sequence belongs to the 4Fe4S bacterial-type ferredoxin family. RnfC subfamily. In terms of assembly, the complex is composed of six subunits: RsxA, RsxB, RsxC, RsxD, RsxE and RsxG. The cofactor is [4Fe-4S] cluster.

The protein resides in the cell inner membrane. Functionally, part of a membrane-bound complex that couples electron transfer with translocation of ions across the membrane. Required to maintain the reduced state of SoxR. The polypeptide is Ion-translocating oxidoreductase complex subunit C (Shigella flexneri serotype 5b (strain 8401)).